Reading from the N-terminus, the 493-residue chain is Cobyric acid synthase (493 aa).

The GATase cobBQ-type domain occupies 252-443; the sequence is DLQITVVRLP…LHGLFDNGPW (192 aa). Cys-333 serves as the catalytic Nucleophile. His-435 is an active-site residue.

Belongs to the CobB/CobQ family. CobQ subfamily.

It participates in cofactor biosynthesis; adenosylcobalamin biosynthesis. In terms of biological role, catalyzes amidations at positions B, D, E, and G on adenosylcobyrinic A,C-diamide. NH(2) groups are provided by glutamine, and one molecule of ATP is hydrogenolyzed for each amidation. The chain is Cobyric acid synthase from Nostoc sp. (strain PCC 7120 / SAG 25.82 / UTEX 2576).